A 417-amino-acid polypeptide reads, in one-letter code: NADH-quinone oxidoreductase subunit D (417 aa).

Belongs to the complex I 49 kDa subunit family. In terms of assembly, NDH-1 is composed of 14 different subunits. Subunits NuoB, C, D, E, F, and G constitute the peripheral sector of the complex.

It is found in the cell inner membrane. The enzyme catalyses a quinone + NADH + 5 H(+)(in) = a quinol + NAD(+) + 4 H(+)(out). In terms of biological role, NDH-1 shuttles electrons from NADH, via FMN and iron-sulfur (Fe-S) centers, to quinones in the respiratory chain. The immediate electron acceptor for the enzyme in this species is believed to be ubiquinone. Couples the redox reaction to proton translocation (for every two electrons transferred, four hydrogen ions are translocated across the cytoplasmic membrane), and thus conserves the redox energy in a proton gradient. This Coxiella burnetii (strain Dugway 5J108-111) protein is NADH-quinone oxidoreductase subunit D.